Here is a 505-residue protein sequence, read N- to C-terminus: MSQIIGHISQVIGPVVDVYFEGTESDLILPSIHDALEIKRHNGKKLIVEVQQHIGENTVRTVAMDSTDGLQRGMKVFPTGGPITMPVGEQIKGRLMNVVGDSIDGMKELNRDGAYSIHRDPPKFEDLTTVQEVLFTGIKVIDLLEPYSKGGKIGLFGGAGVGKTVLIMELINNIAKKHNGFSVFAGVGERTREGNDLLREMIESGVIRYGEAFKESMEKGHWDLSKVDYNEVEKSQATLVFGQMNEPPGARASVALSGLTVAESFRDMGAKSGARDILFFIDNIFRFTQAGSEVSALLGRMPSAVGYQPTLATEMGAMQERITSTKTGSITSVQAVYVPADDLTDPAPATTFTHLDATTVLSRKITELGIYPAVDPLESTSRILDPHIVGQEHYDVAQRVKQILQRNKELQDIISILGMEELSDADRLVVNRARRVQRFLSQPFTVAEQFTGVPGAMVAIEDTIKGFKMILDGEVDYLPEPAFLNVGTIEEAIEKGKKLLEQANK.

157–164 (GGAGVGKT) lines the ATP pocket.

It belongs to the ATPase alpha/beta chains family. In terms of assembly, F-type ATPases have 2 components, CF(1) - the catalytic core - and CF(0) - the membrane proton channel. CF(1) has five subunits: alpha(3), beta(3), gamma(1), delta(1), epsilon(1). CF(0) has three main subunits: a(1), b(2) and c(9-12). The alpha and beta chains form an alternating ring which encloses part of the gamma chain. CF(1) is attached to CF(0) by a central stalk formed by the gamma and epsilon chains, while a peripheral stalk is formed by the delta and b chains.

It is found in the cell inner membrane. It catalyses the reaction ATP + H2O + 4 H(+)(in) = ADP + phosphate + 5 H(+)(out). Produces ATP from ADP in the presence of a proton gradient across the membrane. The catalytic sites are hosted primarily by the beta subunits. The sequence is that of ATP synthase subunit beta from Bacteroides fragilis (strain ATCC 25285 / DSM 2151 / CCUG 4856 / JCM 11019 / LMG 10263 / NCTC 9343 / Onslow / VPI 2553 / EN-2).